The chain runs to 182 residues: Large ribosomal subunit protein uL5 (182 aa).

The protein belongs to the universal ribosomal protein uL5 family. In terms of assembly, part of the 50S ribosomal subunit; part of the 5S rRNA/L5/L18/L25 subcomplex. Contacts the 5S rRNA and the P site tRNA. Forms a bridge to the 30S subunit in the 70S ribosome.

Its function is as follows. This is one of the proteins that bind and probably mediate the attachment of the 5S RNA into the large ribosomal subunit, where it forms part of the central protuberance. In the 70S ribosome it contacts protein S13 of the 30S subunit (bridge B1b), connecting the 2 subunits; this bridge is implicated in subunit movement. Contacts the P site tRNA; the 5S rRNA and some of its associated proteins might help stabilize positioning of ribosome-bound tRNAs. The chain is Large ribosomal subunit protein uL5 from Thermus thermophilus (strain ATCC BAA-163 / DSM 7039 / HB27).